A 498-amino-acid polypeptide reads, in one-letter code: Cytochrome P450 monooxygenase 110 (498 aa).

A helical membrane pass occupies residues 7 to 24; that stretch reads YVFALLGILATLYFVRWS. The N-linked (GlcNAc...) asparagine glycan is linked to Asn425. Cys440 provides a ligand contact to heme.

It belongs to the cytochrome P450 family. Requires heme as cofactor.

It localises to the membrane. It participates in secondary metabolite biosynthesis. In terms of biological role, cytochrome P450 monooxygenase that is able to use dehydroabietic acid and testosterone as substrates for oxidation, suggesting that the natural substrate(s) may be structurally related to steroid compounds. In Postia placenta (strain ATCC 44394 / Madison 698-R) (Brown rot fungus), this protein is Cytochrome P450 monooxygenase 110.